The sequence spans 345 residues: Phosphoribosylformylglycinamidine cyclo-ligase (345 aa).

The protein belongs to the AIR synthase family.

Its subcellular location is the cytoplasm. It catalyses the reaction 2-formamido-N(1)-(5-O-phospho-beta-D-ribosyl)acetamidine + ATP = 5-amino-1-(5-phospho-beta-D-ribosyl)imidazole + ADP + phosphate + H(+). Its pathway is purine metabolism; IMP biosynthesis via de novo pathway; 5-amino-1-(5-phospho-D-ribosyl)imidazole from N(2)-formyl-N(1)-(5-phospho-D-ribosyl)glycinamide: step 2/2. The protein is Phosphoribosylformylglycinamidine cyclo-ligase of Shewanella putrefaciens (strain CN-32 / ATCC BAA-453).